The following is a 345-amino-acid chain: tRNA pseudouridine synthase B (345 aa).

D39 functions as the Nucleophile in the catalytic mechanism.

Belongs to the pseudouridine synthase TruB family. Type 1 subfamily.

It catalyses the reaction uridine(55) in tRNA = pseudouridine(55) in tRNA. Functionally, responsible for synthesis of pseudouridine from uracil-55 in the psi GC loop of transfer RNAs. This is tRNA pseudouridine synthase B from Rickettsia peacockii (strain Rustic).